Here is a 205-residue protein sequence, read N- to C-terminus: Adenylyl-sulfate kinase (205 aa).

ATP is bound at residue 31–38 (GLSGSGKS). S105 functions as the Phosphoserine intermediate in the catalytic mechanism.

It belongs to the APS kinase family.

It catalyses the reaction adenosine 5'-phosphosulfate + ATP = 3'-phosphoadenylyl sulfate + ADP + H(+). It functions in the pathway sulfur metabolism; hydrogen sulfide biosynthesis; sulfite from sulfate: step 2/3. Functionally, catalyzes the synthesis of activated sulfate. In Shewanella halifaxensis (strain HAW-EB4), this protein is Adenylyl-sulfate kinase.